The primary structure comprises 1068 residues: Sucrose-phosphate synthase (1068 aa).

2 disordered regions span residues 18-47 (HTSSRGAGGGGGGGDPRSPTKAASPRGAHM) and 118-139 (KEQEQVRREATEDLAEDLSEGE). Gly residues predominate over residues 23 to 32 (GAGGGGGGGD). The segment covering 118-128 (KEQEQVRREAT) has biased composition (basic and acidic residues).

This sequence belongs to the glycosyltransferase 1 family. In terms of assembly, homodimer or homotetramer.

The catalysed reaction is beta-D-fructose 6-phosphate + UDP-alpha-D-glucose = sucrose 6(F)-phosphate + UDP + H(+). It participates in glycan biosynthesis; sucrose biosynthesis; sucrose from D-fructose 6-phosphate and UDP-alpha-D-glucose: step 1/2. With respect to regulation, activity is regulated by phosphorylation and moderated by concentration of metabolites and light. Its function is as follows. Plays a role in photosynthetic sucrose synthesis by catalyzing the rate-limiting step of sucrose biosynthesis from UDP-glucose and fructose- 6-phosphate. Involved in the regulation of carbon partitioning in the leaves of plants. May regulate the synthesis of sucrose and therefore play a major role as a limiting factor in the export of photoassimilates out of the leaf. Plays a role for sucrose availability that is essential for plant growth and fiber elongation. The sequence is that of Sucrose-phosphate synthase from Zea mays (Maize).